The sequence spans 142 residues: Hemoglobin subunit alpha (142 aa).

Residues 2 to 142 enclose the Globin domain; it reads VLSAADKTNV…LSTVLTSKYR (141 aa). Residue Ser4 is modified to Phosphoserine. Residue Lys8 is modified to N6-succinyllysine. Phosphothreonine is present on Thr9. Lys12 carries the post-translational modification N6-succinyllysine. Lys17 is modified (N6-acetyllysine; alternate). Lys17 carries the post-translational modification N6-succinyllysine; alternate. Tyr25 is subject to Phosphotyrosine. Position 36 is a phosphoserine (Ser36). Position 41 is an N6-succinyllysine (Lys41). Ser50 carries the post-translational modification Phosphoserine. Gln59 lines the O2 pocket. Residue His88 participates in heme b binding. A Phosphothreonine modification is found at Thr109. Ser125 carries the phosphoserine modification. Residues Thr135 and Thr138 each carry the phosphothreonine modification. Ser139 is modified (phosphoserine).

It belongs to the globin family. In terms of assembly, heterotetramer of two alpha chains and two beta chains. Red blood cells.

Its function is as follows. Involved in oxygen transport from the lung to the various peripheral tissues. Hemopressin acts as an antagonist peptide of the cannabinoid receptor CNR1. Hemopressin-binding efficiently blocks cannabinoid receptor CNR1 and subsequent signaling. This Monodelphis domestica (Gray short-tailed opossum) protein is Hemoglobin subunit alpha (HBA).